The primary structure comprises 1297 residues: MTFVDDDEEEDFSVPQSASNYYFEDDDKEPVSFARLPIQWSVEEKVDGSGLGFYLRGRSDNGLLPLHKLVKAWRYDLSNFQPEISVLTKDNIWIKLEEPRKSYGELIRTVLVTLHSIQFLRRNPQASEKALWEKLTRSLRSYDVKPSQNDLVDHIGLIAEAAKRDRNLANSKFILAFLTKKPTKRRLPDEDNAKDDFIVGDEDTYVASDEDELDDEDDDFFESVCAICDNGGEILCCEGSCLRSFHATKKDGEDSLCDSLGFNKMQVEAIQKYFCPNCEHKIHQCFICKNLGSSDNSSGAAEVFQCVSATCGYFYHPHCVTRRLRLGNKEESEALERQIIAGEYTCPLHKCSVCENGEVKTDSNLQFAVCRRCPKSYHRKCLPREISFEDIEDEDILTRAWDGLLHNRVLIYCQEHEIDEELLTPVRDHVKFPFTEEQKVFVKEQRRILESHVGRDKARLKVKDPALQDTCGKASKNSFRSSFPSSKDGFSTKKHGLVSSVPDHSRKRKDIDPSIKHKMVPQKSQKMMEDSREAGKNKLGVKEARDAGKSKISLGERLFSYTQEPNPVKPGRVIPVDSKHNKTDSIASKEPGSEIPTLDNDSQRRLLAVMKKATEEITMGTILKKFKIQSTMSTHSTRNVVDKTITMGKVEGSVQAIRTALKKLEEGGNIEDAKAVCEPEVLSQILKWKDKLKVYLAPFLHGARYTSFGRHFTNPEKLQQIVDRLHWYADDGDMIVDFCCGSNDFSCLMNAKLEETGKKCLYKNYDLFPAKNNFNFERKDWMTVSKDELEPGSKLIMGLNPPFGVNASLANKFITKALEFRPKILILIVPPETERLDKKKSSYVLIWEDKTFLSGNSFYLPGSVNEEDKQLEDWNLVPPPLSLWSRSDFAAKHKKIAEKHCHLSRDVGSSKLKIVEEEANASLHPLGASDGMCDDIPMEKDELEVAECVNKILVSEKIDTVETVARVHQSDHLSRRSQLKKEGKTKDYSGRKLGKSMDSNNVDWKSNDMEEDQGELSRAPESIKVKIPEMTSDWQSPVRSSPDDIYAVCTSISTTTPQRSHEAVEASLPAITRTKSNLGKNIREHGCKVQGTGKPEVSRDRPSSVRTSREDIYTVRPSPENTGQKPFEAFEPSYGASLSHFDDGLAAKYGGFGGGYRMPDPPFLPDQFPLRNGPNEMFDFRGYSDLDRGIGQREYPQQYGGHLDPMLAPPPPPNLMDNAFPLQQRYAPHFDQMNYQRMSSFPPQPPLQPSGHNLLNPHDFPLPPPPPSDFEMSPRGFAPGPNPNYPYMSRSGGWIND.

The segment at 222–281 (ESVCAICDNGGEILCCEGSCLRSFHATKKDGEDSLCDSLGFNKMQVEAIQKYFCPNCEHK) adopts a PHD-type 1; degenerate zinc-finger fold. Positions 237, 241, 275, 278, 285, 288, 306, 311, 316, 319, 346, and 349 each coordinate Zn(2+). A PHD-type 2; atypical zinc finger spans residues 282 to 352 (IHQCFICKNL…EYTCPLHKCS (71 aa)). The PHD-type 3; degenerate zinc finger occupies 351–417 (CSVCENGEVK…RVLIYCQEHE (67 aa)). Positions 445-452 (QRRILESH) match the Nuclear localization signal 1 motif. Disordered regions lie at residues 471–547 (CGKA…ARDA) and 562–598 (TQEP…IPTL). A compositionally biased stretch (low complexity) spans 475–487 (SKNSFRSSFPSSK). Residues 492–499 (TKKHGLVS) carry the Nuclear localization signal 2 motif. Residues 526-547 (KMMEDSREAGKNKLGVKEARDA) are compositionally biased toward basic and acidic residues. 2 consecutive short sequence motifs (nuclear localization signal) follow at residues 610-617 (MKKATEEI) and 979-986 (LKKEGKTK). Composition is skewed to basic and acidic residues over residues 969–990 (QSDH…DYSG) and 1096–1109 (EVSR…RTSR). Disordered regions lie at residues 969–1017 (QSDH…GELS), 1085–1109 (HGCK…RTSR), and 1260–1297 (FPLP…WIND).

As to quaternary structure, interacts with WNK8 in nucleus; this interaction is involved in developmental processes regulation but not in RPP7-dependent disease resistance. Interacts with EML1 and EML2 in nucleus. Component of the ASI1-AIPP1-EDM2 (AAE) RNA regulatory complex composed of at least AIPP1/EDM3, ASI1 and EDM2 and may contain CPL2, AIPP2 and AIPP3/BDT1. Binds directly to AIPP1/EDM3. Co-associates with AIPP1/EDM3 to histone H3 lysine 9 dimethylation (H3K9me2)-marked chromatin and transcripts at a critical proximal polyadenylation site of RPP7 to hamper proximal transcript polyadeylation/termination. Phosphorylated by WNK8.

The protein resides in the nucleus. In terms of biological role, cellular antisilencing factor and regulator of genome DNA methylation patterns involved in the regulation of chromatin states. Together with SUVH4, monitors repressive epigenetic marks H3K27me1, H3K9me2, and prevents DNA-methylation at CHG sites, affecting especially the expression of transposons and developmentally important genes. Collaboratively with ASI1 and AIPP1/EDM3, the AAE complex regulates alternative RNA processing (e.g. alternative splicing) and epigenetic silencing (e.g. H3K9me2) of intronic heterochromatin-containing genes as well as genic heterochromatin-containing genes by promoting distal 3' polyadenylation. Epigenetic reader that binds DNA and contributes to transcriptional transposable element (TE) silencing by modulating levels of the repressive post-translational histone modifications (PHM) H3K9me2. In cv. Columbia, required for RPP7-dependent disease resistance against the Hyaloperonospora arabidopsidis isolate Hiks1, by promoting levels of RPP7 via alternative polyadenylation (APA), resulting from cooption of epigenetic information at the TE insertion locus COPIA-R7. Exhibits a global role in NLR (nucleotide-binding, leucine-rich repeat) defense genes epigenetic (e.g. H3K9me2 hallmarks) expression control; promotes the accumulation of RPP7, RPP4 and some other proteins, but mediates the repression of several other NLR products, probably to compensate for fitness penalties caused by defense mechanisms. Regulates development processes such as the formation of leaf pavement cells, leaf expansion, fertility and flowering. Prevents FLC accumulation to control flowering. Modulates stomatal development by regulating the methylation-mediated silencing of ERECTA receptor genes (e.g. ER, ERL1 and ERL2) and preventing cell divisions. This Arabidopsis thaliana (Mouse-ear cress) protein is Protein ENHANCED DOWNY MILDEW 2.